The primary structure comprises 212 residues: Suppressor of cytokine signaling 1 (212 aa).

The interval 1 to 55 is disordered; it reads MVARNQVAADNAISPAAEPRRRSEPSSSSSSSSPAAPVRPRPCPAVPAPAPGDTH. Residues 25–36 are compositionally biased toward low complexity; the sequence is PSSSSSSSSPAA. A compositionally biased stretch (pro residues) spans 37 to 50; the sequence is PVRPRPCPAVPAPA. The segment at 56 to 67 is kinase inhibitory region (KIR); the sequence is FRTFRSHSDYRR. Residues 68–79 are extended SH2 subdomain (ESS); the sequence is ITRTSALLDACG. The SH2 domain occupies 80–175; that stretch reads FYWGPLSVHG…PLRQRRVRPL (96 aa). The SOCS box domain occupies 162–211; sequence MLGAPLRQRRVRPLQELCRQRIVAAVGRENLARIPLNPVLRDYLSSFPFQ. Positions 174–183 are interaction with Elongin BC complex; it reads PLQELCRQRI.

It belongs to the SOCS1 family. In terms of assembly, interacts with multiple activated proteins of the tyrosine kinase signaling pathway including JAK family kinases, TEC, KIT, GRB2 and VAV. Binding to JAKs is mediated through the KIR and SH2 domain to a phosphorylated tyrosine residue within the JAK JH1 domain. Binds the SH3 domain of GRB2 via diproline determinants in the N-terminus, and the N-terminal regulatory domain of VAV. Interacts with the Elongin BC complex (ELOB and ELOC). Component of an ECS CBC(SOCS1) E3 ubiquitin-protein ligase complex which contains Elongin BC, CUL5, RBX1 and SOCS1. Interacts (via SH2 domain and SOCS box) with TRIM8. Interacts with CUL2. Interacts with AXL and FGFR3. Interacts with INSR. Interacts with TRIM8. Interacts with DCUN1D1. Interacts with IFNGR1. High expression in thymus. Lower expression in lung and spleen. Expressed in both Th1 and Th2 cells.

The protein resides in the nucleus. It is found in the cytoplasmic vesicle. It participates in protein modification; protein ubiquitination. Essential negative regulator of type I and type II interferon (IFN) signaling, as well as that of other cytokines, including IL2, IL4, IL6 and leukemia inhibitory factor (LIF). Downregulates cytokine signaling by inhibiting the JAK/STAT signaling pathway. Acts by binding to JAK proteins and to IFNGR1 and inhibiting their kinase activity. In vitro, suppresses Tec protein-tyrosine activity. Regulates IFN-gamma (IFNG)-mediated sensory neuron survival. Probable substrate recognition component of an ECS (Elongin BC-CUL2/5-SOCS-box protein) E3 ubiquitin ligase complex which mediates the ubiquitination and subsequent proteasomal degradation of target proteins. In Mus musculus (Mouse), this protein is Suppressor of cytokine signaling 1.